The chain runs to 559 residues: Proton-coupled zinc antiporter SLC30A9, mitochondrial (559 aa).

Residues 58–96 (SSDQKEDGGSKGTSAASSPEKSMAGLDPSKPEQKSTFPP) form a disordered region. The next 5 helical transmembrane spans lie at 230–250 (VVIV…LAWV), 305–325 (GVGI…IGLL), 333–353 (LLWA…TLLV), 389–409 (AAAV…SLTG), and 415–435 (SLGS…LIYT). The LXXLL motif signature appears at 453–457 (LTELL).

This sequence belongs to the cation diffusion facilitator (CDF) transporter (TC 2.A.4) family. SLC30A subfamily.

It is found in the mitochondrion membrane. Its subcellular location is the nucleus. The protein resides in the endoplasmic reticulum. The enzyme catalyses Zn(2+)(in) + 2 H(+)(out) = Zn(2+)(out) + 2 H(+)(in). Its function is as follows. Mitochondrial proton-coupled zinc ion antiporter mediating the export of zinc from the mitochondria and involved in zinc homeostasis, zinc mobilization as well as mitochondrial morphology and health. In nucleus, may function as a secondary coactivator for nuclear receptors. The chain is Proton-coupled zinc antiporter SLC30A9, mitochondrial (slc30a9) from Xenopus laevis (African clawed frog).